Here is a 424-residue protein sequence, read N- to C-terminus: Histidine--tRNA ligase (424 aa).

This sequence belongs to the class-II aminoacyl-tRNA synthetase family. Homodimer.

Its subcellular location is the cytoplasm. The enzyme catalyses tRNA(His) + L-histidine + ATP = L-histidyl-tRNA(His) + AMP + diphosphate + H(+). This is Histidine--tRNA ligase from Escherichia coli O17:K52:H18 (strain UMN026 / ExPEC).